Here is a 529-residue protein sequence, read N- to C-terminus: Scarecrow-like protein 13 (529 aa).

Positions 51–81 (ASGSLPSYDSPSVSITSGRSPFSPQGSQSCI) are enriched in polar residues. The disordered stretch occupies residues 51-84 (ASGSLPSYDSPSVSITSGRSPFSPQGSQSCISDL). Residues 146 to 525 (LLALTPQLDL…RPMATCSVWK (380 aa)) form the GRAS domain. The leucine repeat I (LRI) stretch occupies residues 153 to 213 (LDLKEVLVEA…RARLEGSGSN (61 aa)). Residues 232–297 (MSVLYEICPY…GGPPLLRVTG (66 aa)) form a VHIID region. Residues 263–267 (VHIID) carry the VHIID motif. The leucine repeat II (LRII) stretch occupies residues 313–345 (LVGERLATLAQSCGVPFEFHDAIMSGCKVQREH). The interval 354–448 (VVVNFPYVLH…QHCVARDIVN (95 aa)) is PFYRE. The tract at residues 451–525 (ACEESERVER…RPMATCSVWK (75 aa)) is SAW.

Belongs to the GRAS family. As to expression, expressed in roots, hypocotyls, cotyledons, shoot apex, leaves, flowers and siliques.

Its subcellular location is the cytoplasm. It is found in the nucleus. Functionally, probable transcription factor that acts as a positive regulator of continuous red light signals downstream of phytochrome B (phyB). Required for the regulation of hypocotyl elongation during de-etiolation. May be required to modulate phytochrome A (phyA) signal transduction in a phyB-independent way. The protein is Scarecrow-like protein 13 (SCL13) of Arabidopsis thaliana (Mouse-ear cress).